A 349-amino-acid polypeptide reads, in one-letter code: Phosphoribosylformylglycinamidine cyclo-ligase (349 aa).

This sequence belongs to the AIR synthase family.

It is found in the cytoplasm. It carries out the reaction 2-formamido-N(1)-(5-O-phospho-beta-D-ribosyl)acetamidine + ATP = 5-amino-1-(5-phospho-beta-D-ribosyl)imidazole + ADP + phosphate + H(+). Its pathway is purine metabolism; IMP biosynthesis via de novo pathway; 5-amino-1-(5-phospho-D-ribosyl)imidazole from N(2)-formyl-N(1)-(5-phospho-D-ribosyl)glycinamide: step 2/2. In Listeria monocytogenes serotype 4b (strain CLIP80459), this protein is Phosphoribosylformylglycinamidine cyclo-ligase.